We begin with the raw amino-acid sequence, 157 residues long: Aspartate carbamoyltransferase regulatory chain (157 aa).

4 residues coordinate Zn(2+): Cys-108, Cys-113, Cys-138, and Cys-141.

The protein belongs to the PyrI family. Contains catalytic and regulatory chains. Zn(2+) serves as cofactor.

In terms of biological role, involved in allosteric regulation of aspartate carbamoyltransferase. This is Aspartate carbamoyltransferase regulatory chain from Korarchaeum cryptofilum (strain OPF8).